Reading from the N-terminus, the 351-residue chain is Phenylacetaldoxime dehydratase (351 aa).

Belongs to the heme-containing dehydratase family. As to quaternary structure, monomer. It depends on heme b as a cofactor.

The enzyme catalyses (Z)-phenylacetaldehyde oxime = phenylacetonitrile + H2O. Catalyzes the stoichiometric dehydration of Z-phenylacetaldoxime to phenylacetonitrile. Prefers the Z-form of phenylacetaldoxime over its E-isomer. The protein is Phenylacetaldoxime dehydratase of Bacillus sp. (strain OxB-1).